A 609-amino-acid polypeptide reads, in one-letter code: Heat shock factor protein (609 aa).

Polar residues predominate over residues 1-33 (MIQTASTISSNGGTNQGMESSSANSPEMNGTQN). Residues 1 to 47 (MIQTASTISSNGGTNQGMESSSANSPEMNGTQNSMSVGMSGSGSSQN) form a disordered region. Over residues 34-45 (SMSVGMSGSGSS) the composition is skewed to low complexity. The DNA-binding element occupies 50–156 (ITQFSNKLYN…LLCLVTRKKA (107 aa)). Disordered regions lie at residues 255 to 298 (PTVS…GKYR), 310 to 371 (SSFN…TDPK), 411 to 445 (NNTSSEQHHNSYRGSVSNSQPSGNLSESTNLQPVQ), and 567 to 609 (SNGN…SIGA). Composition is skewed to polar residues over residues 257–277 (VSPTNEPSAHSRPSPQGTTAN), 339–360 (DSFNNSIDSYISPNQSPNTDVP), 422–443 (YRGSVSNSQPSGNLSESTNLQP), and 567–597 (SNGNTFGSNPVSLPNQQKSVNPSLMTVSSPR). Position 350 is a phosphoserine (S350). A compositionally biased stretch (basic residues) spans 598-609 (QVRKKRKSSIGA).

It belongs to the HSF family. In terms of assembly, homotrimer.

The protein resides in the nucleus. Its function is as follows. DNA-binding protein that specifically binds heat shock promoter elements (HSE) and activates transcription. Also required for growth at normal temperatures. In Schizosaccharomyces pombe (strain 972 / ATCC 24843) (Fission yeast), this protein is Heat shock factor protein (hsf1).